Consider the following 203-residue polypeptide: MKTLSPEGSLWVFGYGSLIWHPPPHYDYSIPCFIKGYVRRFWMRSEDHRGTVNSPGLVLTLIPYEEWKQFSDWSFTPFDEGCWGMAFRIPAKYATQVREYLDDREVNGYTAHSVPVYAHTGDEIPVLENCLVYVGTSKSPQFQPSDDLTQMAKIISTRRGKSGDNFVYLFELAKCLRHLSPESKDIHVFELEAEVRKQMQKTR.

12–17 (VFGYGS) contributes to the substrate binding site. E105 (proton acceptor) is an active-site residue.

Belongs to the gamma-glutamylcyclotransferase family. ChaC subfamily.

Its subcellular location is the cytoplasm. The protein localises to the nucleus. The enzyme catalyses glutathione = L-cysteinylglycine + 5-oxo-L-proline. Its function is as follows. Gamma-glutamylcyclotransferase acting specifically on glutathione, but not on other gamma-glutamyl peptides. Allows utilization of gluthathione through subsequent cleavage of the Cys-Gly dipeptide by Cys-Gly metallodipeptidase dug1. The protein is Glutathione-specific gamma-glutamylcyclotransferase of Schizosaccharomyces pombe (strain 972 / ATCC 24843) (Fission yeast).